Reading from the N-terminus, the 361-residue chain is Phospho-N-acetylmuramoyl-pentapeptide-transferase (361 aa).

A run of 10 helical transmembrane segments spans residues 21–41 (YLTV…LWIG), 74–94 (MGGI…ANLA), 97–117 (YVWF…VDDY), 132–152 (WKYF…YAIG), 168–188 (VMPQ…VGTG), 199–219 (GLAI…AWAT), 239–259 (LVIF…FNTY), 264–284 (FMGD…AVLV), 288–308 (FLLV…ILQV), and 339–359 (VIIR…ITLK).

It belongs to the glycosyltransferase 4 family. MraY subfamily. Requires Mg(2+) as cofactor.

The protein localises to the cell inner membrane. It catalyses the reaction UDP-N-acetyl-alpha-D-muramoyl-L-alanyl-gamma-D-glutamyl-meso-2,6-diaminopimeloyl-D-alanyl-D-alanine + di-trans,octa-cis-undecaprenyl phosphate = di-trans,octa-cis-undecaprenyl diphospho-N-acetyl-alpha-D-muramoyl-L-alanyl-D-glutamyl-meso-2,6-diaminopimeloyl-D-alanyl-D-alanine + UMP. The protein operates within cell wall biogenesis; peptidoglycan biosynthesis. In terms of biological role, catalyzes the initial step of the lipid cycle reactions in the biosynthesis of the cell wall peptidoglycan: transfers peptidoglycan precursor phospho-MurNAc-pentapeptide from UDP-MurNAc-pentapeptide onto the lipid carrier undecaprenyl phosphate, yielding undecaprenyl-pyrophosphoryl-MurNAc-pentapeptide, known as lipid I. The sequence is that of Phospho-N-acetylmuramoyl-pentapeptide-transferase from Histophilus somni (strain 129Pt) (Haemophilus somnus).